Here is a 695-residue protein sequence, read N- to C-terminus: Nicastrin (695 aa).

The signal sequence occupies residues methionine 1 to alanine 22. Over glutamine 23–glutamine 654 the chain is Extracellular. Residues asparagine 45, asparagine 108, asparagine 116, asparagine 138, asparagine 381, asparagine 461, asparagine 489, asparagine 585, and asparagine 609 are each glycosylated (N-linked (GlcNAc...) asparagine). Residues valine 655–isoleucine 675 form a helical membrane-spanning segment. Topologically, residues serine 676–glycine 695 are cytoplasmic.

It belongs to the nicastrin family. Component of the gamma-secretase complex, a complex composed of a presenilin (Psn) homodimer, nicastrin (Nct), Aph-1 and Pen-2.

It localises to the membrane. Functionally, essential subunit of the gamma-secretase complex, an endoprotease complex that catalyzes the intramembrane cleavage of integral membrane proteins such as Notch. It probably represents a stabilizing cofactor required for the assembly of the gamma-secretase complex. This is Nicastrin from Drosophila melanogaster (Fruit fly).